The sequence spans 371 residues: 4-hydroxybutyrate dehydrogenase (371 aa).

Residues 88-92, 126-130, and K148 each bind NAD(+); these read GSVID and TTCGT. Fe cation is bound by residues D182, H186, H253, and H267. Residue H267 participates in NAD(+) binding.

It belongs to the iron-containing alcohol dehydrogenase family. As to quaternary structure, homodimer. The cofactor is Fe(2+). Cu(2+) is required as a cofactor.

It catalyses the reaction 4-hydroxybutanoate + NAD(+) = succinate semialdehyde + NADH + H(+). Its activity is regulated as follows. Inactivated by oxygen. Its function is as follows. Involved in the anaerobic succinate degradation pathway. Catalyzes the interconversion of gamma-hydroxybutyrate (GHB) and succinic semialdehyde (SSA). This Clostridium kluyveri (strain ATCC 8527 / DSM 555 / NBRC 12016 / NCIMB 10680 / K1) protein is 4-hydroxybutyrate dehydrogenase.